Consider the following 272-residue polypeptide: Probable ribosomal RNA small subunit methyltransferase A (272 aa).

S-adenosyl-L-methionine contacts are provided by N23, L25, G50, E71, D95, and N110.

It belongs to the class I-like SAM-binding methyltransferase superfamily. rRNA adenine N(6)-methyltransferase family. RsmA subfamily.

The protein resides in the cytoplasm. Functionally, specifically dimethylates two adjacent adenosines in the loop of a conserved hairpin near the 3'-end of 16S rRNA in the 30S particle. May play a critical role in biogenesis of 30S subunits. The polypeptide is Probable ribosomal RNA small subunit methyltransferase A (Thermococcus onnurineus (strain NA1)).